The following is a 428-amino-acid chain: Enolase (428 aa).

Glutamine 163 is a binding site for (2R)-2-phosphoglycerate. Glutamate 205 acts as the Proton donor in catalysis. Mg(2+) is bound by residues aspartate 242, glutamate 286, and aspartate 313. Positions 338, 367, 368, and 389 each coordinate (2R)-2-phosphoglycerate. Lysine 338 acts as the Proton acceptor in catalysis.

This sequence belongs to the enolase family. Requires Mg(2+) as cofactor.

It is found in the cytoplasm. The protein resides in the secreted. It localises to the cell surface. The catalysed reaction is (2R)-2-phosphoglycerate = phosphoenolpyruvate + H2O. Its pathway is carbohydrate degradation; glycolysis; pyruvate from D-glyceraldehyde 3-phosphate: step 4/5. Catalyzes the reversible conversion of 2-phosphoglycerate (2-PG) into phosphoenolpyruvate (PEP). It is essential for the degradation of carbohydrates via glycolysis. The protein is Enolase of Bordetella avium (strain 197N).